A 333-amino-acid chain; its full sequence is Photosystem II assembly lipoprotein Ycf48 (333 aa).

Positions 1–23 (MNRLLSSAVNLLLVLVLGVGLSG) are cleaved as a signal peptide. C24 carries N-palmitoyl cysteine lipidation. A lipid anchor (S-diacylglycerol cysteine) is attached at C24.

It belongs to the Ycf48 family. Part of early PSII assembly complexes which includes D1 (psbA) and PsbI; not found in mature PSII. Binds to the lumenal side of PSII complexes. Interacts with YidC.

Its subcellular location is the cellular thylakoid membrane. In terms of biological role, a factor required for optimal assembly of photosystem II (PSII), acting in the early stages of PSII assembly. Also plays a role in replacement of photodamaged D1 (psbA). Assists YidC in synthesis of chlorophyll-binding proteins. This chain is Photosystem II assembly lipoprotein Ycf48, found in Synechococcus sp. (strain CC9902).